Here is a 180-residue protein sequence, read N- to C-terminus: Acireductone dioxygenase (180 aa).

Positions 97, 99, 103, and 141 each coordinate Fe(2+). Positions 97, 99, 103, and 141 each coordinate Ni(2+).

It belongs to the acireductone dioxygenase (ARD) family. In terms of assembly, monomer. Fe(2+) serves as cofactor. Ni(2+) is required as a cofactor.

It carries out the reaction 1,2-dihydroxy-5-(methylsulfanyl)pent-1-en-3-one + O2 = 3-(methylsulfanyl)propanoate + CO + formate + 2 H(+). It catalyses the reaction 1,2-dihydroxy-5-(methylsulfanyl)pent-1-en-3-one + O2 = 4-methylsulfanyl-2-oxobutanoate + formate + 2 H(+). It functions in the pathway amino-acid biosynthesis; L-methionine biosynthesis via salvage pathway; L-methionine from S-methyl-5-thio-alpha-D-ribose 1-phosphate: step 5/6. Catalyzes 2 different reactions between oxygen and the acireductone 1,2-dihydroxy-3-keto-5-methylthiopentene (DHK-MTPene) depending upon the metal bound in the active site. Fe-containing acireductone dioxygenase (Fe-ARD) produces formate and 2-keto-4-methylthiobutyrate (KMTB), the alpha-ketoacid precursor of methionine in the methionine recycle pathway. Ni-containing acireductone dioxygenase (Ni-ARD) produces methylthiopropionate, carbon monoxide and formate, and does not lie on the methionine recycle pathway. In Acidiphilium cryptum (strain JF-5), this protein is Acireductone dioxygenase.